The primary structure comprises 1452 residues: Receptor-type tyrosine-protein phosphatase mu (1452 aa).

An N-terminal signal peptide occupies residues 1-20 (MRGLGTCLATLAGLLLTAAG). Topologically, residues 21 to 742 (ETFSGGCLFD…PEKQTDHTVK (722 aa)) are extracellular. The 163-residue stretch at 22-184 (TFSGGCLFDE…VKVLGHPCTR (163 aa)) folds into the MAM domain. An intrachain disulfide couples Cys27 to Cys36. 4 N-linked (GlcNAc...) asparagine glycosylation sites follow: Asn72, Asn92, Asn131, and Asn249. 2 disulfides stabilise this stretch: Cys96-Cys182 and Cys206-Cys260. In terms of domain architecture, Ig-like C2-type spans 186–277 (PHFLRIQNVE…VGISNYAELV (92 aa)). 4 consecutive Fibronectin type-III domains span residues 284–379 (PIAP…CADP), 382–480 (GPRK…TDED), 482–587 (PGAV…SAPS), and 589–671 (PAYE…DSLQ). Asn406, Asn414, Asn454, Asn534, Asn544, Asn598, Asn651, and Asn681 each carry an N-linked (GlcNAc...) asparagine glycan. The chain crosses the membrane as a helical span at residues 743–764 (IAGVIAGILLFVIIFLGVVLVM). Topologically, residues 765–1452 (KKRKLAKKRK…EVALEYLNSG (688 aa)) are cytoplasmic. Phosphoserine is present on Ser821. Tyrosine-protein phosphatase domains follow at residues 900 to 1154 (FKEE…ILEA) and 1186 to 1448 (IKEE…ALEY). Substrate is bound by residues Asp1063, 1095–1101 (CSAGAGR), and Gln1139. Cys1095 functions as the Phosphocysteine intermediate in the catalytic mechanism. Cys1389 functions as the Phosphocysteine intermediate in the catalytic mechanism.

The protein belongs to the protein-tyrosine phosphatase family. Receptor class 2B subfamily. As to quaternary structure, homodimer.

Its subcellular location is the cell membrane. It carries out the reaction O-phospho-L-tyrosyl-[protein] + H2O = L-tyrosyl-[protein] + phosphate. Its function is as follows. Receptor protein-tyrosine phosphatase that mediates homotypic cell-cell interactions and plays a role in adipogenic differentiation via modulation of p120 catenin/CTNND1 phosphorylation. Promotes CTNND1 dephosphorylation and prevents its cytoplasmic localization where it inhibits SLC2A4 membrane trafficking. In turn, SLC2A4 is directed to the plasma membrane and performs its glucose transporter function. The chain is Receptor-type tyrosine-protein phosphatase mu (PTPRM) from Homo sapiens (Human).